The primary structure comprises 233 residues: Large ribosomal subunit protein uL1 (233 aa).

This sequence belongs to the universal ribosomal protein uL1 family. As to quaternary structure, part of the 50S ribosomal subunit.

In terms of biological role, binds directly to 23S rRNA. The L1 stalk is quite mobile in the ribosome, and is involved in E site tRNA release. Functionally, protein L1 is also a translational repressor protein, it controls the translation of the L11 operon by binding to its mRNA. The sequence is that of Large ribosomal subunit protein uL1 from Campylobacter concisus (strain 13826).